The sequence spans 540 residues: MWLLRCVLLCVSLSLAVSGQHKPEAPDYSSVLHCGPWSFQFAVNLNQEATSPPVLIAWDNQGLLHELQNDSDCGTWIRKGPGSSVVLEATYSSCYVTEWDSHYIMPVGVEGAGAAEHKVVTERKLLKCPMDLLARDAPDTDWCDSIPARDRLPCAPSPISRGDCEGLGCCYSSEEVNSCYYGNTVTLHCTREGHFSIAVSRNVTSPPLLLDSVRLALRNDSACNPVMATQAFVLFQFPFTSCGTTRQITGDRAVYENELVATRDVKNGSRGSVTRDSIFRLHVSCSYSVSSNSLPINVQVFTLPPPFPETQPGPLTLELQIAKDKNYGSYYGVGDYPVVKLLRDPIYVEVSILHRTDPYLGLLLQQCWATPSTDPLSQPQWPILVKGCPYIGDNYQTQLIPVQKALDLPFPSHHQRFSIFTFSFVNPTVEKQALRGPVHLHCSVSVCQPAETPSCVVTCPDLSRRRNFDNSSQNTTASVSSKGPMILLQATKDPPEKLRVPVDSKVLWVAGLSGTLILGALLVSYLAVKKQKSCPDQMCQ.

A signal peptide spans M1–S18. Residues G19 to K505 lie on the Extracellular side of the membrane. N-linked (GlcNAc...) asparagine glycosylation occurs at N69. The P-type domain maps to D141–N183. The region spanning H188–R466 is the ZP domain. N202, N219, and N267 each carry an N-linked (GlcNAc...) asparagine glycan. A glycan (O-linked (GalNAc...) threonine) is linked at T302. The cysteines at positions 367 and 442 are disulfide-linked. Residues S463–Q540 constitute a propeptide, removed in mature form. 2 N-linked (GlcNAc...) asparagine glycosylation sites follow: N470 and N474. A helical transmembrane segment spans residues V506–L526. Residues A527 to Q540 lie on the Cytoplasmic side of the membrane.

Belongs to the ZP domain family. ZPB subfamily. In terms of processing, proteolytically cleaved before the transmembrane segment to yield the secreted ectodomain incorporated in the zona pellucida. As to expression, expressed in oocytes.

It is found in the zona pellucida. The protein resides in the cell membrane. In terms of biological role, component of the zona pellucida, an extracellular matrix surrounding oocytes which mediates sperm binding, induction of the acrosome reaction and prevents post-fertilization polyspermy. The zona pellucida is composed of 3 to 4 glycoproteins, ZP1, ZP2, ZP3, and ZP4. ZP4 may act as a sperm receptor. This chain is Zona pellucida sperm-binding protein 4 (ZP4), found in Homo sapiens (Human).